Reading from the N-terminus, the 473-residue chain is Ribulose bisphosphate carboxylase large chain 2 (473 aa).

The substrate site is built by Asn116 and Thr166. The Proton acceptor role is filled by Lys168. Lys170 lines the substrate pocket. Positions 194, 196, and 197 each coordinate Mg(2+). Position 194 is an N6-carboxylysine (Lys194). His287 serves as the catalytic Proton acceptor. Substrate is bound by residues Arg288, His320, and Ser372.

Belongs to the RuBisCO large chain family. Type I subfamily. Heterohexadecamer of 8 large chains and 8 small chains. Mg(2+) is required as a cofactor.

It catalyses the reaction 2 (2R)-3-phosphoglycerate + 2 H(+) = D-ribulose 1,5-bisphosphate + CO2 + H2O. The enzyme catalyses D-ribulose 1,5-bisphosphate + O2 = 2-phosphoglycolate + (2R)-3-phosphoglycerate + 2 H(+). In terms of biological role, ruBisCO catalyzes two reactions: the carboxylation of D-ribulose 1,5-bisphosphate, the primary event in carbon dioxide fixation, as well as the oxidative fragmentation of the pentose substrate. Both reactions occur simultaneously and in competition at the same active site. The protein is Ribulose bisphosphate carboxylase large chain 2 of Cereibacter sphaeroides (strain ATCC 17025 / ATH 2.4.3) (Rhodobacter sphaeroides).